A 503-amino-acid chain; its full sequence is AMP phosphorylase (503 aa).

Residues G168, 194 to 199 (SRAITS), and T203 contribute to the AMP site. Catalysis depends on D256, which acts as the Proton donor. AMP contacts are provided by S264 and K288.

It belongs to the thymidine/pyrimidine-nucleoside phosphorylase family. Type 2 subfamily.

It carries out the reaction AMP + phosphate = alpha-D-ribose 1,5-bisphosphate + adenine. The catalysed reaction is CMP + phosphate = cytosine + alpha-D-ribose 1,5-bisphosphate. The enzyme catalyses UMP + phosphate = alpha-D-ribose 1,5-bisphosphate + uracil. In terms of biological role, catalyzes the conversion of AMP and phosphate to adenine and ribose 1,5-bisphosphate (R15P). Exhibits phosphorylase activity toward CMP and UMP in addition to AMP. Functions in an archaeal AMP degradation pathway, together with R15P isomerase and RubisCO. This is AMP phosphorylase from Pyrococcus furiosus (strain ATCC 43587 / DSM 3638 / JCM 8422 / Vc1).